The primary structure comprises 154 residues: D-ribose pyranase 2 (154 aa).

His20 serves as the catalytic Proton donor. Substrate contacts are provided by residues Asp28, His98, and 121 to 123; that span reads WGN.

The protein belongs to the RbsD / FucU family. RbsD subfamily. As to quaternary structure, homodecamer.

It localises to the cytoplasm. It carries out the reaction beta-D-ribopyranose = beta-D-ribofuranose. It functions in the pathway carbohydrate metabolism; D-ribose degradation; D-ribose 5-phosphate from beta-D-ribopyranose: step 1/2. Functionally, catalyzes the interconversion of beta-pyran and beta-furan forms of D-ribose. The sequence is that of D-ribose pyranase 2 from Rubrobacter xylanophilus (strain DSM 9941 / JCM 11954 / NBRC 16129 / PRD-1).